The following is a 167-amino-acid chain: Calcium-binding protein CML19 (167 aa).

EF-hand domains are found at residues 23–58, 59–94, 96–131, and 132–167; these read QKRR…LGFE, MNNQ…KFGE, DSID…LGEN, and FTDN…TSYG. Asp-36, Asp-38, Ser-40, Ser-42, Glu-47, Asp-72, Asn-74, Ser-76, Glu-83, Asp-109, Asp-111, Asn-113, Lys-115, Asp-120, Asp-145, Asp-147, Asp-149, Glu-151, and Glu-156 together coordinate Ca(2+).

It belongs to the centrin family. In terms of assembly, interacts with RAD4. Calcium is required for this interaction. Interacts with SAC3B. In terms of tissue distribution, expressed in leaves, roots, and at lower level in stems. Barely detectable in flower buds and flowers.

The protein resides in the cytoplasm. Its subcellular location is the nucleus. Its function is as follows. Potential calcium sensor that binds calcium in vitro. Modulates homologous recombination and nucleotide excision repair (NER). Involved in the early response to UV irradiation. The chain is Calcium-binding protein CML19 from Arabidopsis thaliana (Mouse-ear cress).